The following is a 593-amino-acid chain: Bifunctional lycopene cyclase/phytoene synthase (593 aa).

Residues 1 to 242 form a lycopene beta-cyclase region; sequence MAYDYALVHL…IVFGMAVFDQ (242 aa). Helical transmembrane passes span 8–28, 31–51, 77–97, 117–136, 147–167, 169–189, and 231–251; these read VHLK…YPIF, IHFL…LPWD, IEEL…YILL, IARG…LYGV, YLGL…TVAG, FILT…TVYL, and ILIV…FAFP. A phytoene synthase region spans residues 249-593; it reads AFPHLFPKVP…KTVLKALFSA (345 aa).

In the N-terminal section; belongs to the lycopene beta-cyclase family. It in the C-terminal section; belongs to the phytoene/squalene synthase family.

Its subcellular location is the membrane. It carries out the reaction all-trans-lycopene = gamma-carotene. It catalyses the reaction gamma-carotene = all-trans-beta-carotene. The enzyme catalyses 2 (2E,6E,10E)-geranylgeranyl diphosphate = 15-cis-phytoene + 2 diphosphate. It participates in carotenoid biosynthesis; beta-carotene biosynthesis. It functions in the pathway carotenoid biosynthesis; phytoene biosynthesis; all-trans-phytoene from geranylgeranyl diphosphate: step 1/1. Its function is as follows. Bifunctional enzyme that catalyzes the reactions from geranylgeranyl diphosphate to phytoene (phytoene synthase) and lycopene to beta-carotene via the intermediate gamma-carotene (lycopene cyclase). The protein is Bifunctional lycopene cyclase/phytoene synthase of Podospora anserina (strain S / ATCC MYA-4624 / DSM 980 / FGSC 10383) (Pleurage anserina).